Consider the following 404-residue polypeptide: Argininosuccinate synthase (404 aa).

7–15 is a binding site for ATP; that stretch reads AYSGGLDTS. L-citrulline-binding residues include tyrosine 85 and serine 90. An ATP-binding site is contributed by glycine 115. Positions 117, 121, and 122 each coordinate L-aspartate. L-citrulline is bound at residue asparagine 121. Residues arginine 125, serine 178, serine 187, glutamate 264, and tyrosine 276 each contribute to the L-citrulline site.

It belongs to the argininosuccinate synthase family. Type 1 subfamily. In terms of assembly, homotetramer.

Its subcellular location is the cytoplasm. It carries out the reaction L-citrulline + L-aspartate + ATP = 2-(N(omega)-L-arginino)succinate + AMP + diphosphate + H(+). It participates in amino-acid biosynthesis; L-arginine biosynthesis; L-arginine from L-ornithine and carbamoyl phosphate: step 2/3. The sequence is that of Argininosuccinate synthase from Rhodopirellula baltica (strain DSM 10527 / NCIMB 13988 / SH1).